The following is a 72-amino-acid chain: Translation initiation factor IF-1 (72 aa).

The S1-like domain maps to 2–72 (AKDDVIEVEG…TRGRITYRYK (71 aa)). Position 60 is a phosphotyrosine (Tyr60).

This sequence belongs to the IF-1 family. Component of the 30S ribosomal translation pre-initiation complex which assembles on the 30S ribosome in the order IF-2 and IF-3, IF-1 and N-formylmethionyl-tRNA(fMet); mRNA recruitment can occur at any time during PIC assembly.

The protein resides in the cytoplasm. Functionally, one of the essential components for the initiation of protein synthesis. Stabilizes the binding of IF-2 and IF-3 on the 30S subunit to which N-formylmethionyl-tRNA(fMet) subsequently binds. Helps modulate mRNA selection, yielding the 30S pre-initiation complex (PIC). Upon addition of the 50S ribosomal subunit IF-1, IF-2 and IF-3 are released leaving the mature 70S translation initiation complex. The sequence is that of Translation initiation factor IF-1 from Bacillus subtilis (strain 168).